The chain runs to 365 residues: Glucose 1-dehydrogenase 1 (365 aa).

D38 serves as a coordination point for Zn(2+). A substrate-binding site is contributed by T40. Residues H63 and E64 each contribute to the Zn(2+) site. 2 residues coordinate substrate: E115 and E151. E151 is a binding site for Zn(2+). NADP(+) is bound by residues 182–185, 207–208, 272–274, and 301–303; these read NGSL, RR, LGV, and SVN. N303 serves as a coordination point for substrate.

The protein belongs to the zinc-containing alcohol dehydrogenase family. Glucose 1-dehydrogenase subfamily. Requires Zn(2+) as cofactor.

The enzyme catalyses D-glucose + NAD(+) = D-glucono-1,5-lactone + NADH + H(+). It catalyses the reaction D-glucose + NADP(+) = D-glucono-1,5-lactone + NADPH + H(+). Its function is as follows. Catalyzes the NAD(P)(+)-dependent oxidation of D-glucose to D-gluconate via gluconolactone. Can utilize both NAD(+) and NADP(+) as electron acceptor. Is involved in the degradation of glucose through a modified Entner-Doudoroff pathway. This Haloterrigena turkmenica (strain ATCC 51198 / DSM 5511 / JCM 9101 / NCIMB 13204 / VKM B-1734 / 4k) (Halococcus turkmenicus) protein is Glucose 1-dehydrogenase 1.